The primary structure comprises 201 residues: MAKLLYIKANPKSDQSSRTFIISEHFIKVYKEFHPNDQIITLDLYKEGIHFLSQEDINDIFAPKTEASKHHPILKYAYQFLEADKYVFAAPMWNLGIPAILKAYIDYITVSGITFKYTEQGAVGLLRGKKAVHIMATGGEYKTPPFSDFEMANRYLKTILGFMGVEDFQTITAQRLDIVGEDVEKIISNALKEAEEIAKRF.

92-95 is a binding site for FMN; the sequence is MWNL.

The protein belongs to the azoreductase type 1 family. In terms of assembly, homodimer. Requires FMN as cofactor.

It carries out the reaction 2 a quinone + NADH + H(+) = 2 a 1,4-benzosemiquinone + NAD(+). The catalysed reaction is N,N-dimethyl-1,4-phenylenediamine + anthranilate + 2 NAD(+) = 2-(4-dimethylaminophenyl)diazenylbenzoate + 2 NADH + 2 H(+). Functionally, quinone reductase that provides resistance to thiol-specific stress caused by electrophilic quinones. Also exhibits azoreductase activity. Catalyzes the reductive cleavage of the azo bond in aromatic azo compounds to the corresponding amines. The protein is FMN-dependent NADH:quinone oxidoreductase of Caldicellulosiruptor saccharolyticus (strain ATCC 43494 / DSM 8903 / Tp8T 6331).